Here is a 678-residue protein sequence, read N- to C-terminus: Serine/threonine-protein kinase mph1 (678 aa).

Disordered regions lie at residues 39–93 and 114–209; these read KNDT…NSAL and LPST…SNSV. Composition is skewed to polar residues over residues 41 to 66 and 114 to 125; these read DTFSSKSSHSDGTVTGDTLRRQSSGA and LPSTNASHSEVS. The region spanning 316 to 607 is the Protein kinase domain; the sequence is FIKLGVVGKG…LVHPFLNPLP (292 aa). ATP-binding positions include 322–330 and lysine 345; that span reads VGKGGSSMV. The active-site Proton acceptor is the aspartate 442.

It belongs to the protein kinase superfamily. Ser/Thr protein kinase family.

It carries out the reaction L-seryl-[protein] + ATP = O-phospho-L-seryl-[protein] + ADP + H(+). The enzyme catalyses L-threonyl-[protein] + ATP = O-phospho-L-threonyl-[protein] + ADP + H(+). It catalyses the reaction L-tyrosyl-[protein] + ATP = O-phospho-L-tyrosyl-[protein] + ADP + H(+). In terms of biological role, involved in mitotic spindle assembly checkpoint signaling, a process that delays anaphase until chromosomes are bioriented on the spindle, and in the repair of incorrect mitotic kinetochore-spindle microtubule attachments. Phosphorylates spc7/knl1 on MELT motifs; phosphorylation is required for recruitment of the BUB1-BUB3 complex to kinetochores. The sequence is that of Serine/threonine-protein kinase mph1 from Schizosaccharomyces pombe (strain 972 / ATCC 24843) (Fission yeast).